The sequence spans 175 residues: Large ribosomal subunit protein uL10 (175 aa).

The protein belongs to the universal ribosomal protein uL10 family. Part of the ribosomal stalk of the 50S ribosomal subunit. The N-terminus interacts with L11 and the large rRNA to form the base of the stalk. The C-terminus forms an elongated spine to which L12 dimers bind in a sequential fashion forming a multimeric L10(L12)X complex.

Functionally, forms part of the ribosomal stalk, playing a central role in the interaction of the ribosome with GTP-bound translation factors. In Prochlorococcus marinus subsp. pastoris (strain CCMP1986 / NIES-2087 / MED4), this protein is Large ribosomal subunit protein uL10.